Reading from the N-terminus, the 279-residue chain is HTH-type transcriptional regulator HdfR (279 aa).

In terms of domain architecture, HTH lysR-type spans M1–T58. Positions F18–R37 form a DNA-binding region, H-T-H motif.

This sequence belongs to the LysR transcriptional regulatory family.

Its function is as follows. Negatively regulates the transcription of the flagellar master operon flhDC by binding to the upstream region of the operon. In Escherichia coli (strain SE11), this protein is HTH-type transcriptional regulator HdfR.